The chain runs to 221 residues: PKHD-type hydroxylase PMT_0286 (221 aa).

In terms of domain architecture, Fe2OG dioxygenase spans 80–174; it reads HIHGVMFSRS…RLVCVGWIQS (95 aa). Fe cation contacts are provided by His-98, Asp-100, and His-155. Position 165 (Arg-165) interacts with 2-oxoglutarate.

The cofactor is Fe(2+). L-ascorbate is required as a cofactor.

This chain is PKHD-type hydroxylase PMT_0286, found in Prochlorococcus marinus (strain MIT 9313).